Consider the following 310-residue polypeptide: Putative S-adenosyl-L-methionine-dependent methyltransferase MSMEG_1888/MSMEI_1848 (310 aa).

Residues D128 and 157-158 contribute to the S-adenosyl-L-methionine site; that span reads DL.

The protein belongs to the UPF0677 family.

Its function is as follows. Exhibits S-adenosyl-L-methionine-dependent methyltransferase activity. This Mycolicibacterium smegmatis (strain ATCC 700084 / mc(2)155) (Mycobacterium smegmatis) protein is Putative S-adenosyl-L-methionine-dependent methyltransferase MSMEG_1888/MSMEI_1848.